A 579-amino-acid chain; its full sequence is Glutamine--tRNA ligase (579 aa).

Positions 41 to 51 (PEPNGYLHIGH) match the 'HIGH' region motif. ATP is bound by residues 42–44 (EPN) and 48–54 (HIGHAKA). L-glutamine contacts are provided by aspartate 74 and tyrosine 218. Residues threonine 237, 285–286 (RL), and 293–295 (MSK) each bind ATP. Positions 292 to 296 (VMSKR) match the 'KMSKS' region motif.

It belongs to the class-I aminoacyl-tRNA synthetase family. As to quaternary structure, monomer.

The protein resides in the cytoplasm. The enzyme catalyses tRNA(Gln) + L-glutamine + ATP = L-glutaminyl-tRNA(Gln) + AMP + diphosphate. This is Glutamine--tRNA ligase from Xanthomonas axonopodis pv. citri (strain 306).